The following is a 298-amino-acid chain: Heme A synthase (298 aa).

Residues 1 to 6 are Cytoplasmic-facing; sequence MHRSLK. Residues 7–27 traverse the membrane as a helical segment; the sequence is IFGTLTSIGMVIVLMQGALVT. Topologically, residues 28 to 62 are extracellular; that stretch reads KTESGEGCGATWPLCFGEVIPTNPAIETIIEYSHR. A disulfide bridge connects residues cysteine 35 and cysteine 42. The active site involves glutamate 58. Position 61 (histidine 61) interacts with heme o. Residues 63–83 form a helical membrane-spanning segment; that stretch reads IVSGLLGAMVIILAIWAWRKL. Topologically, residues 84-92 are cytoplasmic; sequence SHIRETKVM. A helical membrane pass occupies residues 93–113; sequence AILAVLFIIFQGLLGAGAVVF. The Extracellular portion of the chain corresponds to 114–117; sequence GQSH. The chain crosses the membrane as a helical span at residues 118–138; sequence AILALHFGISAISLATVVLLT. Histidine 123 lines the heme o pocket. The Cytoplasmic segment spans residues 139-158; that stretch reads TLAFEDGKPNPPALIVKKGY. Residues 159 to 179 traverse the membrane as a helical segment; the sequence is KGYILAVFAYCYAVIYTGAYV. Over 180–209 the chain is Extracellular; sequence KHTQATLACGDFPLCNGQWIPMLSGPVGAH. Cysteine 188 and cysteine 194 are disulfide-bonded. Residues 210 to 230 form a helical membrane-spanning segment; the sequence is FFHRVAGTLLLILLVVALIWT. Histidine 212 contacts heme b. At 231–244 the chain is on the cytoplasmic side; it reads LRKYSHYRSLVWTH. The chain crosses the membrane as a helical span at residues 245–265; the sequence is ILCVILVLTQYATGISIVLTG. The Extracellular portion of the chain corresponds to 266 to 271; that stretch reads NELFVA. A helical transmembrane segment spans residues 272–292; that stretch reads MMHALIVSILFTTLCYIVMIL. Position 274 (histidine 274) interacts with heme b. Residues 293–298 are Cytoplasmic-facing; the sequence is SRNKAV.

Belongs to the COX15/CtaA family. Type 1 subfamily. Interacts with CtaB. The cofactor is heme b.

The protein localises to the cell membrane. It carries out the reaction Fe(II)-heme o + 2 A + H2O = Fe(II)-heme a + 2 AH2. The protein operates within porphyrin-containing compound metabolism; heme A biosynthesis; heme A from heme O: step 1/1. Catalyzes the conversion of heme O to heme A by two successive hydroxylations of the methyl group at C8. The first hydroxylation forms heme I, the second hydroxylation results in an unstable dihydroxymethyl group, which spontaneously dehydrates, resulting in the formyl group of heme A. The chain is Heme A synthase from Halalkalibacterium halodurans (strain ATCC BAA-125 / DSM 18197 / FERM 7344 / JCM 9153 / C-125) (Bacillus halodurans).